The primary structure comprises 121 residues: UPF0091 protein PH1428 (121 aa).

This sequence belongs to the UPF0091 family.

This chain is UPF0091 protein PH1428, found in Pyrococcus horikoshii (strain ATCC 700860 / DSM 12428 / JCM 9974 / NBRC 100139 / OT-3).